A 600-amino-acid chain; its full sequence is Sulfite reductase [NADPH] flavoprotein alpha-component (600 aa).

Residues 63–201 form the Flavodoxin-like domain; sequence ITLISASQTG…AAQAWRQRVV (139 aa). FMN contacts are provided by residues 69 to 74, 116 to 119, and 152 to 161; these read SQTGNA, STQG, and LGDTSYEHFC. One can recognise an FAD-binding FR-type domain in the interval 235 to 449; it reads ESPLTATLSV…IEHNDNFRLP (215 aa). FAD is bound by residues Thr323, Ala357, 387 to 390, 405 to 407, and 420 to 423; these read RLYS, TVG, and GGAS. Residues 520–521, 526–530, and Asp562 each bind NADP(+); these read SR and KIYVQ. FAD is bound at residue Tyr600.

Belongs to the NADPH-dependent sulphite reductase flavoprotein subunit CysJ family. This sequence in the N-terminal section; belongs to the flavodoxin family. The protein in the C-terminal section; belongs to the flavoprotein pyridine nucleotide cytochrome reductase family. As to quaternary structure, alpha(8)-beta(8). The alpha component is a flavoprotein, the beta component is a hemoprotein. The cofactor is FAD. It depends on FMN as a cofactor.

The enzyme catalyses hydrogen sulfide + 3 NADP(+) + 3 H2O = sulfite + 3 NADPH + 4 H(+). It participates in sulfur metabolism; hydrogen sulfide biosynthesis; hydrogen sulfide from sulfite (NADPH route): step 1/1. Component of the sulfite reductase complex that catalyzes the 6-electron reduction of sulfite to sulfide. This is one of several activities required for the biosynthesis of L-cysteine from sulfate. The flavoprotein component catalyzes the electron flow from NADPH -&gt; FAD -&gt; FMN to the hemoprotein component. This chain is Sulfite reductase [NADPH] flavoprotein alpha-component, found in Cronobacter sakazakii (strain ATCC BAA-894) (Enterobacter sakazakii).